The chain runs to 78 residues: Small acidic protein 2 (78 aa).

In terms of tissue distribution, expressed in siliques and anthers.

Functionally, mediates responses to the synthetic auxin 2,4-dichlorophenoxyacetic acid (2,4-D). Not involved in the response to indole-3-acetic acid (IAA). May interact with RUB modification-related components and may regulate the culling-ring ubiquitin E3 ligase complex (CRL) activity. The chain is Small acidic protein 2 (SMAP2) from Arabidopsis thaliana (Mouse-ear cress).